A 619-amino-acid polypeptide reads, in one-letter code: Dihydroxy-acid dehydratase 1 (619 aa).

Aspartate 81 is a binding site for Mg(2+). Cysteine 122 is a [2Fe-2S] cluster binding site. The Mg(2+) site is built by aspartate 123 and lysine 124. The residue at position 124 (lysine 124) is an N6-carboxylysine. Cysteine 201 is a binding site for [2Fe-2S] cluster. Glutamate 496 is a Mg(2+) binding site. The Proton acceptor role is filled by serine 522.

Belongs to the IlvD/Edd family. Homodimer. [2Fe-2S] cluster is required as a cofactor. The cofactor is Mg(2+).

The catalysed reaction is (2R)-2,3-dihydroxy-3-methylbutanoate = 3-methyl-2-oxobutanoate + H2O. It catalyses the reaction (2R,3R)-2,3-dihydroxy-3-methylpentanoate = (S)-3-methyl-2-oxopentanoate + H2O. Its pathway is amino-acid biosynthesis; L-isoleucine biosynthesis; L-isoleucine from 2-oxobutanoate: step 3/4. It functions in the pathway amino-acid biosynthesis; L-valine biosynthesis; L-valine from pyruvate: step 3/4. Functionally, functions in the biosynthesis of branched-chain amino acids. Catalyzes the dehydration of (2R,3R)-2,3-dihydroxy-3-methylpentanoate (2,3-dihydroxy-3-methylvalerate) into 2-oxo-3-methylpentanoate (2-oxo-3-methylvalerate) and of (2R)-2,3-dihydroxy-3-methylbutanoate (2,3-dihydroxyisovalerate) into 2-oxo-3-methylbutanoate (2-oxoisovalerate), the penultimate precursor to L-isoleucine and L-valine, respectively. The polypeptide is Dihydroxy-acid dehydratase 1 (Burkholderia lata (strain ATCC 17760 / DSM 23089 / LMG 22485 / NCIMB 9086 / R18194 / 383)).